Consider the following 283-residue polypeptide: Phosphatidylglycerol--prolipoprotein diacylglyceryl transferase (283 aa).

A run of 7 helical transmembrane segments spans residues 21–41 (IEVHWYGLAYACAIVIAFYMA), 62–82 (YFLWAELGIVLGARIGYILIY), 106–126 (FIGIRGMSYHGGLVGFLIASY), 136–156 (LLIYLDLIAISLPLGYVFGRI), 190–210 (PSQLIEAFLEGVIVFLMVMWA), 218–238 (GLLIVVYGLGYSLMRFIAEFY), and 252–272 (LSMGQILSLFMVIVSLGILLY). Arginine 155 is an a 1,2-diacyl-sn-glycero-3-phospho-(1'-sn-glycerol) binding site.

It belongs to the Lgt family.

It is found in the cell inner membrane. It catalyses the reaction L-cysteinyl-[prolipoprotein] + a 1,2-diacyl-sn-glycero-3-phospho-(1'-sn-glycerol) = an S-1,2-diacyl-sn-glyceryl-L-cysteinyl-[prolipoprotein] + sn-glycerol 1-phosphate + H(+). Its pathway is protein modification; lipoprotein biosynthesis (diacylglyceryl transfer). Functionally, catalyzes the transfer of the diacylglyceryl group from phosphatidylglycerol to the sulfhydryl group of the N-terminal cysteine of a prolipoprotein, the first step in the formation of mature lipoproteins. The protein is Phosphatidylglycerol--prolipoprotein diacylglyceryl transferase of Helicobacter acinonychis (strain Sheeba).